A 76-amino-acid chain; its full sequence is MTYFTSWDEFAKAAERLHSANPEKCRFVTKYNHTKGQLVLKLTDDVVCLQYSTNQLQDVKKLEKLSSTLLRGIVTQ.

This sequence belongs to the SRP9 family. In terms of assembly, heterodimer with SRP14; binds RNA as heterodimer. Component of a signal recognition particle complex that consists of a 7SL RNA molecule of 300 nucleotides and six protein subunits: srpa-72, srpa-68, SRP54, F37F2.2/SRP19, F25G6.8/SRP14 and ZK512.4/SRP9.

The protein localises to the cytoplasm. Its function is as follows. Component of the signal recognition particle (SRP) complex, a ribonucleoprotein complex that mediates the cotranslational targeting of secretory and membrane proteins to the endoplasmic reticulum (ER). SRP9 together with SRP14 and the Alu portion of the SRP RNA, constitutes the elongation arrest domain of SRP. The complex of SRP9 and SRP14 is required for SRP RNA binding. This Caenorhabditis elegans protein is Signal recognition particle 9 kDa protein.